The primary structure comprises 382 residues: Lipid-A-disaccharide synthase (382 aa).

This sequence belongs to the LpxB family.

It carries out the reaction 2-N,3-O-bis[(3R)-3-hydroxytetradecanoyl]-alpha-D-glucosaminyl 1-phosphate + UDP-2-N,3-O-bis[(3R)-3-hydroxytetradecanoyl]-alpha-D-glucosamine = lipid A disaccharide (E. coli) + UDP + H(+). It catalyses the reaction a lipid X + a UDP-2-N,3-O-bis[(3R)-3-hydroxyacyl]-alpha-D-glucosamine = a lipid A disaccharide + UDP + H(+). It functions in the pathway glycolipid biosynthesis; lipid IV(A) biosynthesis; lipid IV(A) from (3R)-3-hydroxytetradecanoyl-[acyl-carrier-protein] and UDP-N-acetyl-alpha-D-glucosamine: step 5/6. Its function is as follows. Condensation of UDP-2,3-diacylglucosamine and 2,3-diacylglucosamine-1-phosphate to form lipid A disaccharide, a precursor of lipid A, a phosphorylated glycolipid that anchors the lipopolysaccharide to the outer membrane of the cell. The polypeptide is Lipid-A-disaccharide synthase (Shigella flexneri serotype 5b (strain 8401)).